A 231-amino-acid chain; its full sequence is Transmembrane protein 225 (231 aa).

At 1–13 (MVHILVRKVEATN) the chain is on the cytoplasmic side. The helical transmembrane segment at 14-34 (MFFSSWTLVFLAVGIIIEEWA) threads the bilayer. Topologically, residues 35-67 (ELKLGPQKPTITHSPWICCTPLWPSDGLEVIRN) are extracellular. The helical transmembrane segment at 68-88 (ILIVVLSLSFMHNLLLGFEFT) threads the bilayer. Residues 89–97 (YMIPQTKYT) are Cytoplasmic-facing. A helical membrane pass occupies residues 98–118 (LIMTACLAFLTGILLLGALLL). The Extracellular portion of the chain corresponds to 119–135 (YHHMLRQGESVYYSSYK). The chain crosses the membrane as a helical span at residues 136–156 (ISWIIFTAYLNVLFLFISGFL). At 157–231 (SLLQYKQPID…IQARRVTWAL (75 aa)) the chain is on the cytoplasmic side. Residues 225–229 (RRVTW) carry the RVxF motif.

As to quaternary structure, interacts (via RVxF motif) with PPP1CC.

The protein resides in the cytoplasmic vesicle. It is found in the secretory vesicle. Its subcellular location is the acrosome membrane. Its function is as follows. Probably inhibits protein phosphatase 1 (PP1) in sperm via binding to catalytic subunit PPP1CC. This chain is Transmembrane protein 225 (TMEM225), found in Bos taurus (Bovine).